Consider the following 118-residue polypeptide: Large ribosomal subunit protein bL20 (118 aa).

This sequence belongs to the bacterial ribosomal protein bL20 family.

Its function is as follows. Binds directly to 23S ribosomal RNA and is necessary for the in vitro assembly process of the 50S ribosomal subunit. It is not involved in the protein synthesizing functions of that subunit. This Elusimicrobium minutum (strain Pei191) protein is Large ribosomal subunit protein bL20.